The chain runs to 71 residues: Beta-defensin 25 (71 aa).

An N-terminal signal peptide occupies residues 1-22; the sequence is MAKWILLIVALLVLSHVPPGST. 3 disulfide bridges follow: cysteine 27–cysteine 54, cysteine 34–cysteine 48, and cysteine 38–cysteine 55.

Belongs to the beta-defensin family.

The protein resides in the secreted. Its function is as follows. Has antibacterial activity. In Mus musculus (Mouse), this protein is Beta-defensin 25 (Defb25).